The primary structure comprises 943 residues: Valine--tRNA ligase (943 aa).

A 'HIGH' region motif is present at residues 45-55 (PNVTGTLHMGH). The short motif at 541–545 (KMSKS) is the 'KMSKS' region element. ATP is bound at residue Lys544. The stretch at 875 to 934 (IDVAAERIRLAKEIEKLEKQISIAQGKLANEGFVARAPAAVIDQEKQRVADFTATLEQLK) forms a coiled coil.

It belongs to the class-I aminoacyl-tRNA synthetase family. ValS type 1 subfamily. As to quaternary structure, monomer.

Its subcellular location is the cytoplasm. The enzyme catalyses tRNA(Val) + L-valine + ATP = L-valyl-tRNA(Val) + AMP + diphosphate. In terms of biological role, catalyzes the attachment of valine to tRNA(Val). As ValRS can inadvertently accommodate and process structurally similar amino acids such as threonine, to avoid such errors, it has a 'posttransfer' editing activity that hydrolyzes mischarged Thr-tRNA(Val) in a tRNA-dependent manner. This is Valine--tRNA ligase from Dechloromonas aromatica (strain RCB).